A 405-amino-acid polypeptide reads, in one-letter code: Serine--glyoxylate aminotransferase (405 aa).

Lys196 carries the N6-(pyridoxal phosphate)lysine modification.

Belongs to the class-V pyridoxal-phosphate-dependent aminotransferase family. Pyridoxal 5'-phosphate serves as cofactor.

The catalysed reaction is glyoxylate + L-serine = 3-hydroxypyruvate + glycine. The protein operates within one-carbon metabolism; formaldehyde assimilation via serine pathway. This chain is Serine--glyoxylate aminotransferase (sgaA), found in Hyphomicrobium methylovorum.